An 804-amino-acid chain; its full sequence is Tubulin polyglutamylase TTLL13 (804 aa).

The segment at methionine 1–arginine 41 is disordered. Residues asparagine 4–serine 30 adopt a coiled-coil conformation. The span at serine 11–valine 26 shows a compositional bias: acidic residues. In terms of domain architecture, TTL spans arginine 85–glutamate 430. ATP is bound by residues lysine 202, glutamine 208–glycine 209, glutamine 230–isoleucine 233, and lysine 243–aspartate 245. Glutamine 208 contacts a protein. L-glutamate is bound at residue arginine 269. Threonine 291–asparagine 292 contributes to the ATP binding site. L-glutamate is bound by residues tyrosine 293 and lysine 311. The Mg(2+) site is built by aspartate 376, glutamate 389, and asparagine 391. Histidine 392 serves as a coordination point for a protein. The c-MTBD region stretch occupies residues arginine 401–glycine 482. Lysine 407 provides a ligand contact to L-glutamate. 2 coiled-coil regions span residues alanine 504–asparagine 541 and glutamine 585–leucine 609. A disordered region spans residues isoleucine 519–threonine 556. Basic and acidic residues predominate over residues glutamate 536–arginine 551.

It belongs to the tubulin--tyrosine ligase family. Requires Mg(2+) as cofactor. As to expression, highly expressed in heart and testis. Expressed in brain, kidney, liver, lung, muscle and trachea. In the brain, expressed in ependymal cilia, cortex, corpus callosum and striatum.

The enzyme catalyses (L-glutamyl)(n)-gamma-L-glutamyl-L-glutamyl-[protein] + L-glutamate + ATP = (L-glutamyl)(n+1)-gamma-L-glutamyl-L-glutamyl-[protein] + ADP + phosphate + H(+). Its function is as follows. Polyglutamylase which modifies tubulin, generating polyglutamate side chains of variable lengths on the gamma-carboxyl group of specific glutamate residues within the C-terminal tail of tubulin. Mediates ATP-dependent polyglutamate side-chain elongation of the polyglutamylation reaction but not the initiation step. Preferentially modifies the alpha-tubulin tail over a beta-tail. This Mus musculus (Mouse) protein is Tubulin polyglutamylase TTLL13.